Here is a 544-residue protein sequence, read N- to C-terminus: Glycoprotein gp100 (544 aa).

The first 19 residues, 1–19 (MKNFILLVFLFLLVSNSLG), serve as a signal peptide directing secretion. Residues 20 to 489 (KSNKKDDQSP…SGGGGNKKLY (470 aa)) are Extracellular-facing. Asn80 is a glycosylation site (N-linked (GlcNAc...) asparagine). Polar residues predominate over residues 84–99 (EPQNNPIPTVSINPDQ). Positions 84-215 (EPQNNPIPTV…TPTRPSSSVS (132 aa)) are disordered. Low complexity-rich tracts occupy residues 126-142 (SKPT…TIPP), 150-165 (PQTT…TPTP), and 189-199 (PKPTKSSKPTK). 8 N-linked (GlcNAc...) asparagine glycosylation sites follow: Asn224, Asn308, Asn332, Asn366, Asn380, Asn410, Asn422, and Asn478. Residues 444–480 (KPSTTDDDNNKNNDDGDSEIDSVGKSAVDSSKSNNNS) form a disordered region. The helical transmembrane segment at 490–510 (LLIILPTVLFIIVAALVAIFI) threads the bilayer. Residues 511-544 (KTRVSQNSGSKVNKNNNKKDSINVPFQMLDEITT) lie on the Cytoplasmic side of the membrane.

In terms of processing, N- and O-glycosylated.

The protein resides in the membrane. This chain is Glycoprotein gp100 (gppA), found in Dictyostelium discoideum (Social amoeba).